The primary structure comprises 136 residues: NHL-repeat-containing protein 4 (136 aa).

NHL repeat units lie at residues 48 to 91 and 93 to 132; these read QPLG…FPRV and PPICLQLEGLKRPLGMACAPQGQLVVADAGDNCIKLYQYL.

The protein is NHL-repeat-containing protein 4 (Nhlrc4) of Mus musculus (Mouse).